The sequence spans 215 residues: Tail hub protein A (215 aa).

In terms of assembly, heterotrimer with THB. The heterotrimers further assemble as 12 docking hubs that anchor the trimeric tail fibers.

Its subcellular location is the virion. Its function is as follows. Forms the tail hub together with tail hub protein B (THB). The sequence is that of Tail hub protein A from Bacteroides phage crAss001 (Bacteroides phage PhiCrAss001).